The sequence spans 201 residues: Recombination protein RecR (201 aa).

The segment at 59–74 adopts a C4-type zinc-finger fold; the sequence is CEICGNMDTENICCIC. Positions 82–177 constitute a Toprim domain; that stretch reads SVIAVVETVA…KISRLASGIP (96 aa).

The protein belongs to the RecR family.

May play a role in DNA repair. It seems to be involved in an RecBC-independent recombinational process of DNA repair. It may act with RecF and RecO. The polypeptide is Recombination protein RecR (Rickettsia felis (strain ATCC VR-1525 / URRWXCal2) (Rickettsia azadi)).